Consider the following 167-residue polypeptide: MAIRRICELPEPVLRKKAKKVPSIDGSIQTLIDDMIETMNSADGAGLAAPQVGVSLRLVVFREPDTKEATVLINPEIIKKEGQRQVTEGCLSIPGYFGELTRAETVTAKGLDRHGKACRIKGTGIVAQLLEHETEHLDGILYIDHLESEDQLHEIGPDDEMPEEIRE.

Fe cation contacts are provided by C90 and H132. E133 is an active-site residue. H136 serves as a coordination point for Fe cation.

Belongs to the polypeptide deformylase family. Fe(2+) serves as cofactor.

It catalyses the reaction N-terminal N-formyl-L-methionyl-[peptide] + H2O = N-terminal L-methionyl-[peptide] + formate. Removes the formyl group from the N-terminal Met of newly synthesized proteins. Requires at least a dipeptide for an efficient rate of reaction. N-terminal L-methionine is a prerequisite for activity but the enzyme has broad specificity at other positions. The sequence is that of Peptide deformylase from Dehalococcoides mccartyi (strain ATCC BAA-2100 / JCM 16839 / KCTC 5957 / BAV1).